A 268-amino-acid chain; its full sequence is Exopolysaccharide production negative regulator (268 aa).

Positions 1 to 22 are cleaved as a signal peptide; the sequence is MRAGELKSLRVAVLGMSLAVGA.

Negatively modulates exopolysaccharide (EPS) biosynthesis. The chain is Exopolysaccharide production negative regulator (exoR) from Rhizobium meliloti (strain 1021) (Ensifer meliloti).